The primary structure comprises 183 residues: Ubiquitin-conjugating enzyme E2 6 (183 aa).

A UBC core domain is found at 1 to 148; it reads MASPSKRREM…VKEYCEKYAK (148 aa). Cys85 (glycyl thioester intermediate) is an active-site residue. A disordered region spans residues 148-183; the sequence is KPEEILSDDDDDDSMSEDGSDSDDDDDDEIVGKADP. Over residues 152-176 the composition is skewed to acidic residues; that stretch reads ILSDDDDDDSMSEDGSDSDDDDDDE.

This sequence belongs to the ubiquitin-conjugating enzyme family. In terms of tissue distribution, expressed in roots, petals, sepals and silique walls.

The enzyme catalyses S-ubiquitinyl-[E1 ubiquitin-activating enzyme]-L-cysteine + [E2 ubiquitin-conjugating enzyme]-L-cysteine = [E1 ubiquitin-activating enzyme]-L-cysteine + S-ubiquitinyl-[E2 ubiquitin-conjugating enzyme]-L-cysteine.. Its pathway is protein modification; protein ubiquitination. Its function is as follows. Accepts the ubiquitin from the E1 complex and catalyzes its covalent attachment to other proteins. This is Ubiquitin-conjugating enzyme E2 6 (UBC6) from Arabidopsis thaliana (Mouse-ear cress).